The sequence spans 484 residues: Bifunctional protein GlmU (484 aa).

The pyrophosphorylase stretch occupies residues 1–240 (MSASRPAAVM…RTEVEGVNDR (240 aa)). Residues 12 to 15 (LAAG), Lys-26, Gln-79, and 84 to 85 (GT) contribute to the UDP-N-acetyl-alpha-D-glucosamine site. Asp-113 is a binding site for Mg(2+). UDP-N-acetyl-alpha-D-glucosamine contacts are provided by Gly-150, Glu-165, Asn-180, and Asn-238. Asn-238 contributes to the Mg(2+) binding site. Residues 241–261 (VQLAEARRLLNARLLEQLMRD) are linker. Residues 262–484 (GVTVVDPAST…RARARSEEDR (223 aa)) form an N-acetyltransferase region. UDP-N-acetyl-alpha-D-glucosamine is bound by residues Arg-343 and Lys-361. The active-site Proton acceptor is His-373. Positions 376 and 387 each coordinate UDP-N-acetyl-alpha-D-glucosamine. Acetyl-CoA contacts are provided by residues Ala-390, 396 to 397 (NY), Ser-415, and Ala-433. The tract at residues 457-484 (EGWVERKRPGTPAAQAAERARARSEEDR) is disordered. The span at 474–484 (ERARARSEEDR) shows a compositional bias: basic and acidic residues.

This sequence in the N-terminal section; belongs to the N-acetylglucosamine-1-phosphate uridyltransferase family. In the C-terminal section; belongs to the transferase hexapeptide repeat family. In terms of assembly, homotrimer. Mg(2+) serves as cofactor.

Its subcellular location is the cytoplasm. It catalyses the reaction alpha-D-glucosamine 1-phosphate + acetyl-CoA = N-acetyl-alpha-D-glucosamine 1-phosphate + CoA + H(+). It carries out the reaction N-acetyl-alpha-D-glucosamine 1-phosphate + UTP + H(+) = UDP-N-acetyl-alpha-D-glucosamine + diphosphate. The protein operates within nucleotide-sugar biosynthesis; UDP-N-acetyl-alpha-D-glucosamine biosynthesis; N-acetyl-alpha-D-glucosamine 1-phosphate from alpha-D-glucosamine 6-phosphate (route II): step 2/2. It participates in nucleotide-sugar biosynthesis; UDP-N-acetyl-alpha-D-glucosamine biosynthesis; UDP-N-acetyl-alpha-D-glucosamine from N-acetyl-alpha-D-glucosamine 1-phosphate: step 1/1. It functions in the pathway bacterial outer membrane biogenesis; LPS lipid A biosynthesis. Its function is as follows. Catalyzes the last two sequential reactions in the de novo biosynthetic pathway for UDP-N-acetylglucosamine (UDP-GlcNAc). The C-terminal domain catalyzes the transfer of acetyl group from acetyl coenzyme A to glucosamine-1-phosphate (GlcN-1-P) to produce N-acetylglucosamine-1-phosphate (GlcNAc-1-P), which is converted into UDP-GlcNAc by the transfer of uridine 5-monophosphate (from uridine 5-triphosphate), a reaction catalyzed by the N-terminal domain. The sequence is that of Bifunctional protein GlmU from Thermobifida fusca (strain YX).